A 268-amino-acid chain; its full sequence is Ribosomal RNA small subunit methyltransferase A (268 aa).

S-adenosyl-L-methionine contacts are provided by Asn16, Leu18, Gly43, Glu64, Asp89, and Asn110.

This sequence belongs to the class I-like SAM-binding methyltransferase superfamily. rRNA adenine N(6)-methyltransferase family. RsmA subfamily.

It is found in the cytoplasm. The enzyme catalyses adenosine(1518)/adenosine(1519) in 16S rRNA + 4 S-adenosyl-L-methionine = N(6)-dimethyladenosine(1518)/N(6)-dimethyladenosine(1519) in 16S rRNA + 4 S-adenosyl-L-homocysteine + 4 H(+). In terms of biological role, specifically dimethylates two adjacent adenosines (A1518 and A1519) in the loop of a conserved hairpin near the 3'-end of 16S rRNA in the 30S particle. May play a critical role in biogenesis of 30S subunits. This chain is Ribosomal RNA small subunit methyltransferase A, found in Pseudomonas syringae pv. tomato (strain ATCC BAA-871 / DC3000).